The chain runs to 361 residues: GDSL esterase/lipase At4g18970 (361 aa).

The first 22 residues, 1–22 (MARVCVMMMAMAIAMAMNIAMG), serve as a signal peptide directing secretion. Serine 35 (nucleophile) is an active-site residue. Catalysis depends on residues aspartate 325 and histidine 328.

Belongs to the 'GDSL' lipolytic enzyme family.

It is found in the secreted. This chain is GDSL esterase/lipase At4g18970, found in Arabidopsis thaliana (Mouse-ear cress).